We begin with the raw amino-acid sequence, 222 residues long: uncharacterized protein (222 aa).

This is an uncharacterized protein from Homo sapiens (Human).